The chain runs to 425 residues: Glucose-1-phosphate adenylyltransferase (425 aa).

Alpha-D-glucose 1-phosphate contacts are provided by residues tyrosine 109, glycine 175, 190–191 (EK), and serine 208.

It belongs to the bacterial/plant glucose-1-phosphate adenylyltransferase family. As to quaternary structure, homotetramer.

It carries out the reaction alpha-D-glucose 1-phosphate + ATP + H(+) = ADP-alpha-D-glucose + diphosphate. It functions in the pathway glycan biosynthesis; glycogen biosynthesis. In terms of biological role, involved in the biosynthesis of ADP-glucose, a building block required for the elongation reactions to produce glycogen. Catalyzes the reaction between ATP and alpha-D-glucose 1-phosphate (G1P) to produce pyrophosphate and ADP-Glc. This chain is Glucose-1-phosphate adenylyltransferase, found in Saccharophagus degradans (strain 2-40 / ATCC 43961 / DSM 17024).